Reading from the N-terminus, the 508-residue chain is Flagellin (508 aa).

This sequence belongs to the bacterial flagellin family.

The protein resides in the secreted. The protein localises to the bacterial flagellum. Its function is as follows. Flagellin is the subunit protein which polymerizes to form the filaments of bacterial flagella. This Salmonella berta protein is Flagellin (fliC).